We begin with the raw amino-acid sequence, 435 residues long: Serine protease snk (435 aa).

Residues 1-27 (MIILWSLIVHLQLTCLHLILQTPNLEA) form the signal peptide. The 47-residue stretch at 92–138 (FCRRSFDGRSGYCILAYQCLHVIREYRVHGTRIDICTHRNNVPVICC) folds into the Clip domain. Cystine bridges form between Cys93/Cys137, Cys104/Cys127, Cys110/Cys138, Cys179/Cys303, Cys220/Cys236, Cys346/Cys366, and Cys377/Cys408. A Peptidase S1 domain is found at 186-432 (IVGGTPTRHG…YLDWIEKIAF (247 aa)). The Charge relay system role is filled by His235. The N-linked (GlcNAc...) asparagine glycan is linked to Asn255. The Charge relay system role is filled by Asp283. Ser381 serves as the catalytic Charge relay system.

This sequence belongs to the peptidase S1 family. CLIP subfamily. As to quaternary structure, interacts (via N-terminal prodomain) with ea/easter (via Peptidase domain); leads to proteolytic activation of ea by snk. This interaction does not require sulfation of a vitelline membrane component by pip but proteolytic cleavage of ea by snk does. Proteolytically activated by gd. May also be cleaved by another protease.

It localises to the secreted. In terms of biological role, component of the extracellular signaling pathway that establishes the dorsal-ventral pathway of the embryo. A protease cascade involving ndl, gd, snk and ea results in activation of the spz Toll receptor ligand; acts downstream of ndl and gd. Activation of ea requires both activation of the ndl-gd-snk protease cascade and sulfation of a vitelline membrane component by pip. Localized activation of the Toll receptor in the ventral region of the embryo defines cell identities along the dorsal-ventral continuum. This chain is Serine protease snk, found in Drosophila melanogaster (Fruit fly).